We begin with the raw amino-acid sequence, 722 residues long: Polyribonucleotide nucleotidyltransferase (722 aa).

Mg(2+) is bound by residues aspartate 495 and aspartate 501. The region spanning 561–620 (PRLYVMKINPEKIREVIGKGGETIRSITKDTGCEINIEEDGTITIASVSSEGAEAAKKRI) is the KH domain. The S1 motif domain maps to 630–700 (GKVYEGTVVK…DRGRIRLSIK (71 aa)).

Belongs to the polyribonucleotide nucleotidyltransferase family. Mg(2+) serves as cofactor.

It localises to the cytoplasm. The enzyme catalyses RNA(n+1) + phosphate = RNA(n) + a ribonucleoside 5'-diphosphate. Functionally, involved in mRNA degradation. Catalyzes the phosphorolysis of single-stranded polyribonucleotides processively in the 3'- to 5'-direction. The sequence is that of Polyribonucleotide nucleotidyltransferase from Chromobacterium violaceum (strain ATCC 12472 / DSM 30191 / JCM 1249 / CCUG 213 / NBRC 12614 / NCIMB 9131 / NCTC 9757 / MK).